We begin with the raw amino-acid sequence, 687 residues long: Glycine--tRNA ligase beta subunit (687 aa).

Belongs to the class-II aminoacyl-tRNA synthetase family. As to quaternary structure, tetramer of two alpha and two beta subunits.

Its subcellular location is the cytoplasm. The catalysed reaction is tRNA(Gly) + glycine + ATP = glycyl-tRNA(Gly) + AMP + diphosphate. The protein is Glycine--tRNA ligase beta subunit of Lactobacillus acidophilus (strain ATCC 700396 / NCK56 / N2 / NCFM).